The chain runs to 349 residues: MELELSLGDSPAPVKATIAPTPVLIPTCMGDEEDLELVLGVRATRRDEQDDQTTCTQSSEEAMEGEEDETRPHGEAPVESLSFPLFVSSAETGSANSEMCTRGFDVNTRPADGGAEAGRPSSPSSMQEASTRQQVADQEAADDEDNGGGGARKKLRLSKEQSSFLEDSFKEHSTLTPKQKSDLANRLNLRPRQVEVWFQNRRARTKLKQTEVDCEHLKRCCERLTRENRRLQREVAELRGALRTTTSSYPPLYGLHHLPAAAGTVFRVCPSCEHSKVVAAAASESFSPRVFAGGGAPAAITAAAAVPSPGAGSPPSSSAALFGARRPHFGPFAAAVIPPVLRRQPSATS.

A disordered region spans residues 42–186 (RATRRDEQDD…PKQKSDLANR (145 aa)). Polar residues-rich tracts occupy residues 89–99 (SAETGSANSEM) and 121–135 (SSPS…RQQV). The segment at residues 150-209 (GARKKLRLSKEQSSFLEDSFKEHSTLTPKQKSDLANRLNLRPRQVEVWFQNRRARTKLKQ) is a DNA-binding region (homeobox). The span at 167–183 (DSFKEHSTLTPKQKSDL) shows a compositional bias: basic and acidic residues. Positions 208–252 (KQTEVDCEHLKRCCERLTRENRRLQREVAELRGALRTTTSSYPPL) are leucine-zipper.

This sequence belongs to the HD-ZIP homeobox family. Class II subfamily. As to quaternary structure, homodimer. May form a heterodimer with HOX1, HOX2 or HOX3. As to expression, expressed in seedlings, roots, leaves, nodes, internodes, flowers and embryo.

The protein resides in the nucleus. Functionally, probable transcription factor that binds to the DNA sequence 5'-CAAT[GC]ATTG-3'. In Oryza sativa subsp. indica (Rice), this protein is Homeobox-leucine zipper protein HOX7 (HOX7).